A 262-amino-acid chain; its full sequence is MINTCALKNYLEKSQKKESPAKETIVTSLNRSLSTPPSHLEGILLINKPKGKTSFSLVRDLRKRLGVKKIGHAGTLDPFATGVMVMLVGRNYTRLSDQFLLSDKEYIAEAYLGVVTDSYDCEGQVLSQSNIIPTLEQIKEAFSLFQGKIEQVPPMFSAKKQQGKKLYELARQGIVVERQPVKISIHTELLSYNYPYLNFRIECSKGTYIRSIAYDLGTKLGCGAHLSNLTRTRSGAFCLENCLNGAEIHTVTNLEQNLIRND.

The Nucleophile role is filled by aspartate 77.

The protein belongs to the pseudouridine synthase TruB family. Type 1 subfamily.

The enzyme catalyses uridine(55) in tRNA = pseudouridine(55) in tRNA. Responsible for synthesis of pseudouridine from uracil-55 in the psi GC loop of transfer RNAs. The sequence is that of tRNA pseudouridine synthase B from Protochlamydia amoebophila (strain UWE25).